A 1938-amino-acid chain; its full sequence is MGVKKKREMQVAALTVCHQDMETLRSFADMEGKNLASLLLHCVQLTDGVSQIHSIKQIVPLLEKVDKNGVCDPAIQSCLDILAGIYFSLTLKNPLKKVLASSLNGLPEVFLTQATHSFTFHLQEELDTADLYSYRKVMDNISSCMENFNLGRASVVNLLKDVLHFLQKSLIEILEENRKFAGNRIVQTQLMSDLLVGVRVAMTLVQKVQGPQGSLWNDSSSPIWQSMCGLLSIFTKFLNDDDLLQTVESTSGLAVILFIKTMFRPSEKLPGLISSLLLRSAECTSIPEWLMNSCRSLCCTDVPASTLLFLCQGTLAMLDWQDGSMGPSGEALLLDIVHVLFTLSSQIKESTLDMFLSRILASWTSSAIQILESGSSGLKGHLNGDSCVPRRLLEYVYTHWEHPLDALRHQTKVMFRNLLQMHRLTMEGADLATDPFCLELTKSLLQLEWHIKGKYACLGCLVETLGIEHILAIDKTIPSQILEVMGDQSLVPYASDLLETMFKNHKSHLKSQTVTNTWMDKWHETWVFPVLSVLCGGNLDQRSYVIDYYLPRILNYSPESLHYMVHILQASTDTGTGSCNHRGALGALMACLRTARAHGHLQSATQAWENLVCSARVKQGLIHQHCQVRIDTLGLLCESNRSTEVVSTEEMQWVQFFITYNLNSQSPGVRQQICSLLKKLFCRIQESSQVLYKLEQRKSTPDSENGSIREQPSVTLQQYKNFMSSVCNILFEALFPGSSYSTRFSALTILGSVAEVFPDPEGNIQTVYQLSHDIDAGRYQILMECFTSTFEEVKTLAFDLLMKLSSVTAGQFQDSEKLQDLFQAALELSTSTKPYDCVTASYLLNLLIRQDALPAVLSASSPQQLTRGAGETSAVLERNTLVVIKCLMENLEDEISQAENSLLQAASSFPMYGRVHCITRAFQRLPLNDLRLASEWRPLLGRLLLLSYRLSTVVAPVIQSSSPEGLIPVDTDSASASRLQLILNEIQPRDTNDYFNHTKILKECDSFDLEDLSTSVSNIDSSAEVKGKEEKACDVTAQMVLACCWRSMKEVALLLGTLCQLLPVQPGPESSNVFLTVQQVKEIGDYFKQHLLQSRHRGAFELAYTGFVKLTEILNRCSNVSLQKLPEQWLRSVLEEIKGSDPSSKLCATRRSAGIPFYIQALLASEPKKSRMDLLKITMRELISLALSADDSKGRVPQVHALNILRALFRDTRLGENIIPYVAGGAKAAILGFTSPVWAVRNSSTLLFSSLITRVFGVKRGKDEVSKTNRMTGREFFSRFPELYPFLLKQLETVASTVDSELGEPDRHPGMFLLLLVLERLYPSPMDGTSSALSLAPFVPFIIRCGRSPIYRSREMAARALVPFIMIDQIPSTLCALLNSLPNSTDQCFRQNHIHGTLLQVFHLLQAYITDCRHRTNADFLQELSDVTACTKAKLWLAMRQNPCLVTRAVYIDILFLLTNCLDRPEEGKQTALESLGFWEDVRRIILESELIKGFPWTFKVPGLPQYLQSLTKLAIPEVWASLAEAKGQATAVPLSFSRLLKSSFPEVRLLALDTLLERARSSEQEQKEPLPLLCSMGEELLLLAMKEDHPGCFCRVLKILYHLNPSEWLPQTECYAHLSPKEFLMWSMDIASNDRSEIQGVALKLASKIIAYRVQSCEKNKDSLAPELRQWVQLVVWSCGDHLPTASRLAVAEVLTSTAPLFLTSPQPILELQGTLSLWRCVLTLLQSEEQTVREAATEIVTTAMSQGNTCQSTEFAFCQVDASIALTLALAVLCDLLQQWDQLEPGLPILLGWLLEEGDDLEGHVQSPHQGEEEHIFEKSEVNFWAETLTFVKSLCRQLFHLLCQSGWQSPHSQKLCHLQRIASEQSHLISQLFRELPLSAEFLKTVEYTRLRIQEERTLAVLRLLACLEGKEGLRAEDCPREWRQVMAPRTEAAC.

The stretch at 877-909 (ERNTLVVIKCLMENLEDEISQAENSLLQAASSF) forms a coiled coil. Phosphoserine occurs at positions 1006, 1015, and 1152.

Belongs to the THADA family.

Functionally, together with methyltransferase FTSJ1, methylates the 2'-O-ribose of nucleotides at position 32 of the anticodon loop of substrate tRNAs. In Mus musculus (Mouse), this protein is tRNA (32-2'-O)-methyltransferase regulator THADA (Thada).